Here is a 479-residue protein sequence, read N- to C-terminus: Glutamate--tRNA ligase (479 aa).

A 'HIGH' region motif is present at residues 21–31 (PSPTGYLHVGG). The 'KMSKS' region motif lies at 248–252 (KLSKR). K251 contributes to the ATP binding site.

This sequence belongs to the class-I aminoacyl-tRNA synthetase family. Glutamate--tRNA ligase type 1 subfamily. Monomer.

The protein resides in the cytoplasm. The catalysed reaction is tRNA(Glu) + L-glutamate + ATP = L-glutamyl-tRNA(Glu) + AMP + diphosphate. Its function is as follows. Catalyzes the attachment of glutamate to tRNA(Glu) in a two-step reaction: glutamate is first activated by ATP to form Glu-AMP and then transferred to the acceptor end of tRNA(Glu). The polypeptide is Glutamate--tRNA ligase (Actinobacillus pleuropneumoniae serotype 5b (strain L20)).